A 2771-amino-acid polypeptide reads, in one-letter code: MSKETKLSRRDSDNHDDEIENVPENLRASLLSLTSNDSLKNPKHECGSKIDRTPSKPRAKNPDPALPLRTPDKYRSAAAFSKNRFGWGDKCDSITNTTNAALLNTTPKTGRVVGRAYSETNSTQNTPTKSVSKPPGSCYRGKLDGTGTVRAGGYASLYKGLSSSSGQVSTVVNSVEVPHFSLKEDPSFWMDHNVQILIRVRPLNSMERSINGYNRCLKQESSQCVAWIGPPETRFQFDHVACETIDQETLFRVAGLPMVENCLSGYNSCIFAYGQTGSGKTYTMLGEVGDLEFKPSPNRGMMPRIFEFLFARIQAEEESRRDERLKYNCKCSFLEIYNEQITDLLEPSSTNLQLREDIKSGVYVENLTECEVQSVQDILGLITQGSLNRRVGATNMNRESSRSHSVFTCVIESRWEKDSTANMRFARLNLVDLAGSERQKTSGAEGDRLKEAASINKSLSTLGHVIMVLVDVANGKPRHIPYRDSRLTFLLQDSLGGNSKTMIIANASPSVSCAAETLNTLKFAQRAKLIQNNAVVNEDSNEDVLELRRQIRLLKEELSLLKRQNISRALSFGSATANFAESQVDSPSSVMHETGQQQAGNLLVYESGGCVRMSRKQLKSLEITLAGSLRREHVADASIKKLEAEIEHLNRLVRQREEDTRSTKMMLRFREDKIQRLESLLGNHISADSFLLEENNVLSEEIQLLQAKIDKNPELTRFALENIRLLDQLRRFQEFYEEGEREILLGEVSNLRNQLFQFLDENSDWQKHVDDGIEPQGASRMSKENCSLQEELKKTCYELEKCRSNLGSCLEENAKLSREINDLQAMVSDIRACTPDEHSSVNKQKALLGTQNFEPHETLACEQANYVEEIIKLQLDLDVQKIILDEERTLRGDTEAQAVRLKFDIEVLKDQLLLISKQQKNVYSELGETKSAVAALESQNIILIQEAVELRRIKENYFELLKKQELDIPAMKSKQCDEFKDNPAEDSEIDTKFKKMQASLEKAKRLNMLYKSDIASKACGDEEMDEVCKQAEAATAEVIVCLQNELEVLQKEVNDFQSKENVTEKQVEILETQMEELQDKLRDTTMDNEQLQEQLRGKDMELLIISNEMELLTSELEEILLNGNEGLTDACYQADLISGSLPDKRIWISEQVGGLIRTLSERELMIEDLESCLEDANKKRCDIESMLKSLKGAAIVMNEAHQREFEEKETDVLLLKSQLCTKTETILRLQEKLKMAERLIYEASDCATASLIIVNRYSEVTESHTFELKQKDFQVAESTGTILSLKQQVQDLEATCKEFRSKLLEEEKNASAMEQKLEEIEETSISAMKEKLSELKGGVSDLRSCITMCQEHDKYTEAENSLSSPAHCSEGQEPGRNVVVSSCIEKTPNNNHTESMRLSSKVSSERGKVIILLKQEMESALASLKEVQVEMANLKGEKEELKASEKRSLSNLNDLAAQICNLNTVMSNMEEQYEHKMEVTDHKLKTLEHEIAKMKIEADQEYVENLCILKKFEEAQGTIREADITVNELVIANEKMRFDLEKQKKRGISLVGEKKALVEKLQELESINVKENEKLAYLEKLFESSLMGIGNLVEELATVVRKLQDESSVALTGMAKDLSELKSWVSETNSARLFLEDIWSEIIMKDCAISVLHLCHMGILLETVTGINTENGLLQRGLCVSNSSIAGLRDNNLRLRRELEMFANLKGKLLTDIKNGFERISRNEEATNLLTTKLSSFDQKISGLQYQEDLMLQRSNSMGSQLDILLKEIDLSNGDLAETLLEQERHLNQKNDFFDTEVQLYLMDLCSKDVELLVLAQTAKEYSSCLAVVDRELLDHHVIVEDLKEKLIVSQVEGELKDQCLVDNKLETVSVKEELTEAQSKIKVLSSDLDRSVQKIAEIDEVNKDFGERVIFLESSITGLQQELAMKASELYSLEHSRSVTAEELDIKERDVQVYADIVSSLKKENVSLKNKFIHFGEDQFKALDVTRLSIAKCSHLTEDSKKLEKLTRDGMAISDKMLQLICENVDKASVFADTVQSLQIDVQELLSENLNLHDELLRKDDVLKGLSFDLSLLQESASNSRDKKDETKEIMVHVEALEKTLALKTFELEDAVSHAQMLEVRLQESKEITRNLEVDTEKARKCQEKLSAENKDIRAEAEDLLAEKCSLEEEMIQTKKVSESMEMELFNLRNALGQLNDTVAFTQRKLNDAIDERDNLQDEVLNLKEEFGKMKSEAKEMEARYIEAQQIAESRKTYADEREEEVKLLEGSVEELEYTINVLENKVNVVKDEAERQRLQREELEMELHTIRQQMESARNADEEMKRILDEKHMDLAQAKKHIEALERNTADQKTEITQLSEHISELNLHAEAQASEYMHKFKELEAMAEQVKPEIHVSQAIDSSLSKGSGKPRGSGSPFRCIGLGITQQMRSEKDEELAAARLRIEELETVVSTRQKEIFLLNSKLAKVDSMTHDINRVLLGVKQNVTNCASFLDSQQVLKIAEMLQHNSSDSRERDLEVSHLKQQLNEYNEKRQGWIEEIEGKQTELVTAQIKLEEHRQYQQLLKKENELLKKENFSHKIKVMELEGEVKKLSSHQNPEWRTRDQARIKEENNVLKLQLDELNLKLRRADVSVSRAKEELAFYRASSVKNPHSNFDKTHQLSTKLKETEEDRMQLAQELLSLCTSILKAAGVTGEDFTDINPEVAEEALEQLKTKLGLLESEVHHFRLKGKAKSRRSRNPERKMPSMPSPRRSWSQSPRSMSQVPFFSSLDR.

2 stretches are compositionally biased toward basic and acidic residues: residues 1-13 (MSKETKLSRRDSD) and 40-54 (KNPKHECGSKIDRTP). Disordered regions lie at residues 1 to 73 (MSKE…TPDK) and 117 to 139 (YSETNSTQNTPTKSVSKPPGSCY). Over residues 118-131 (SETNSTQNTPTKSV) the composition is skewed to polar residues. The region spanning 193-530 (NVQILIRVRP…LKFAQRAKLI (338 aa)) is the Kinesin motor domain. 274–281 (GQTGSGKT) lines the ATP pocket. Microtubules-binding regions lie at residues 400–404 (SSRSH), 431–437 (VDLAGSE), and 479–483 (HIPYR). Coiled-coil stretches lie at residues 1033–1110 (AATA…NEME), 1267–1331 (ELKQ…MKEK), 1410–1505 (IILL…YVEN), 2108–2390 (ELED…EQVK), and 2512–2677 (RERD…LAQE). Residues 2727–2736 (LKGKAKSRRS) are compositionally biased toward basic residues. The disordered stretch occupies residues 2727–2771 (LKGKAKSRRSRNPERKMPSMPSPRRSWSQSPRSMSQVPFFSSLDR). A compositionally biased stretch (low complexity) spans 2744–2762 (PSMPSPRRSWSQSPRSMSQ).

It belongs to the TRAFAC class myosin-kinesin ATPase superfamily. Kinesin family. KIN-12 subfamily. In terms of tissue distribution, expressed in tissues enriched in dividing cells, such as root meristems, root primordia, and leaf primordia/young leaves.

The protein localises to the cytoplasm. The protein resides in the cytoskeleton. Its subcellular location is the phragmoplast. Involved in the spatial control of cytokinesis by a proper phragmoplast guidance. This is Kinesin-like protein KIN-12D from Arabidopsis thaliana (Mouse-ear cress).